We begin with the raw amino-acid sequence, 391 residues long: Pepsin B (391 aa).

Residues 1–16 (MKCLILALICLQLSEG) form the signal peptide. The propeptide at 17–60 (LVVRQILHKGKSIRERMEENGVLEDFLRYNKKADPAAKFLFNKD) is activation peptide. The 314-residue stretch at 75–388 (YFGEISIGTP…DMANNRVGFA (314 aa)) folds into the Peptidase A1 domain. Residue Asp93 is part of the active site. 2 disulfides stabilise this stretch: Cys106-Cys111 and Cys270-Cys274. Asp279 is an active-site residue. Cysteines 313 and 346 form a disulfide.

The protein belongs to the peptidase A1 family.

Its subcellular location is the secreted. The enzyme catalyses Degradation of gelatin, little activity on hemoglobin. Specificity on B chain of insulin more restricted than that of pepsin A. Does not cleave 1-Phe-|-Val-2, 4-Gln-|-His-5 or 23-Gly-|-Phe-24.. Functionally, hydrolyzes various peptides including beta-endorphin, insulin B chain, dynorphin A, and neurokinin A, with high specificity for the cleavage of the Phe-Xaa bonds. This Monodelphis domestica (Gray short-tailed opossum) protein is Pepsin B.